Here is a 413-residue protein sequence, read N- to C-terminus: uncharacterized protein (413 aa).

Transmembrane regions (helical) follow at residues 22-42 (VLLV…TLIL), 270-290 (IIYV…ISIC), 312-332 (ILIQ…GNLI), and 379-399 (LIII…YPIY).

It belongs to the ABC-4 integral membrane protein family. LolC/E subfamily.

The protein resides in the cell membrane. This is an uncharacterized protein from Buchnera aphidicola subsp. Schizaphis graminum (strain Sg).